The chain runs to 364 residues: Methylthioribose-1-phosphate isomerase (364 aa).

Residues 49-51 (RGA), Arg89, and Gln201 contribute to the substrate site. Asp242 serves as the catalytic Proton donor. Position 252-253 (252-253 (NK)) interacts with substrate.

This sequence belongs to the eIF-2B alpha/beta/delta subunits family. MtnA subfamily.

It carries out the reaction 5-(methylsulfanyl)-alpha-D-ribose 1-phosphate = 5-(methylsulfanyl)-D-ribulose 1-phosphate. Its pathway is amino-acid biosynthesis; L-methionine biosynthesis via salvage pathway; L-methionine from S-methyl-5-thio-alpha-D-ribose 1-phosphate: step 1/6. Functionally, catalyzes the interconversion of methylthioribose-1-phosphate (MTR-1-P) into methylthioribulose-1-phosphate (MTRu-1-P). In Leptospira interrogans serogroup Icterohaemorrhagiae serovar copenhageni (strain Fiocruz L1-130), this protein is Methylthioribose-1-phosphate isomerase.